We begin with the raw amino-acid sequence, 310 residues long: Homeobox protein Hox-A13a (310 aa).

A DNA-binding region (homeobox) is located at residues 244–303 (GRKKRVPYTKVQLKELEREYATNKFITKDKRRRISAQTNLSERQVTIWFQNRRVKEKKVV).

The protein belongs to the Abd-B homeobox family.

Its subcellular location is the nucleus. Its function is as follows. Sequence-specific transcription factor which is part of a developmental regulatory system that provides cells with specific positional identities on the anterior-posterior axis. The sequence is that of Homeobox protein Hox-A13a (hoxa13a) from Danio rerio (Zebrafish).